We begin with the raw amino-acid sequence, 176 residues long: Isopentenyl-diphosphate Delta-isomerase (176 aa).

Positions 22 and 28 each coordinate Mn(2+). The region spanning 26–160 (LRHKAISVFI…PETFTPWLHI (135 aa)) is the Nudix hydrolase domain. C62 is an active-site residue. Position 64 (H64) interacts with Mn(2+). E82 provides a ligand contact to Mg(2+). E108 and E110 together coordinate Mn(2+). E110 is a catalytic residue.

This sequence belongs to the IPP isomerase type 1 family. Requires Mg(2+) as cofactor. Mn(2+) is required as a cofactor.

It localises to the cytoplasm. It catalyses the reaction isopentenyl diphosphate = dimethylallyl diphosphate. It participates in isoprenoid biosynthesis; dimethylallyl diphosphate biosynthesis; dimethylallyl diphosphate from isopentenyl diphosphate: step 1/1. It functions in the pathway porphyrin-containing compound metabolism; chlorophyll biosynthesis. Catalyzes the 1,3-allylic rearrangement of the homoallylic substrate isopentenyl (IPP) to its highly electrophilic allylic isomer, dimethylallyl diphosphate (DMAPP). This is Isopentenyl-diphosphate Delta-isomerase from Jannaschia sp. (strain CCS1).